Here is a 126-residue protein sequence, read N- to C-terminus: Large ribosomal subunit protein bL17 (126 aa).

The protein belongs to the bacterial ribosomal protein bL17 family. As to quaternary structure, part of the 50S ribosomal subunit. Contacts protein L32.

This Lysinibacillus sphaericus (strain C3-41) protein is Large ribosomal subunit protein bL17.